The following is a 395-amino-acid chain: Beta-1,4-galactosyltransferase 3 (395 aa).

The Cytoplasmic portion of the chain corresponds to 1–10 (MLRRLLERPC). Residues 11-31 (TLALLVGSQLAVMMYLSLGGF) traverse the membrane as a helical; Signal-anchor for type II membrane protein segment. The Lumenal portion of the chain corresponds to 32 to 395 (RSLSALFGRD…ANHTAPRGSH (364 aa)). An N-linked (GlcNAc...) asparagine glycan is attached at Asn-57. Cys-79 and Cys-121 form a disulfide bridge. Position 132–136 (132–136 (PHRAR)) interacts with UDP-alpha-D-galactose. Asn-168 is a glycosylation site (N-linked (GlcNAc...) asparagine). UDP-alpha-D-galactose is bound by residues 171–173 (FNR), 198–199 (VD), Tyr-228, and Trp-260. Cys-192 and Cys-211 form a disulfide bridge. Asp-199 contacts Mn(2+). 262 to 265 (GEDD) contacts N-acetyl-D-glucosamine. His-293 provides a ligand contact to Mn(2+). Residue 293 to 295 (HRG) participates in UDP-alpha-D-galactose binding. Arg-305 contributes to the N-acetyl-D-glucosamine binding site. Asn-339 carries an N-linked (GlcNAc...) asparagine glycan. The interval 340-395 (ITADIGTDPRGPRSPSGPRYPPGSSQAFRQEMLQRRPPARPGPLPTANHTAPRGSH) is disordered. Low complexity predominate over residues 352 to 364 (RSPSGPRYPPGSS). N-linked (GlcNAc...) asparagine glycosylation occurs at Asn-387.

The protein belongs to the glycosyltransferase 7 family. Requires Mn(2+) as cofactor.

Its subcellular location is the golgi apparatus. The protein localises to the golgi stack membrane. The catalysed reaction is an N-acetyl-beta-D-glucosaminyl derivative + UDP-alpha-D-galactose = a beta-D-galactosyl-(1-&gt;4)-N-acetyl-beta-D-glucosaminyl derivative + UDP + H(+). The enzyme catalyses N-acetyl-D-glucosamine + UDP-alpha-D-galactose = beta-D-galactosyl-(1-&gt;4)-N-acetyl-D-glucosamine + UDP + H(+). It catalyses the reaction a beta-D-GlcNAc-(1-&gt;3)-beta-D-Gal-(1-&gt;4)-beta-D-Glc-(1&lt;-&gt;1)-Cer(d18:1(4E)) + UDP-alpha-D-galactose = a neolactoside nLc4Cer(d18:1(4E)) + UDP + H(+). It carries out the reaction a beta-D-glucosylceramide + UDP-alpha-D-galactose = a beta-D-galactosyl-(1-&gt;4)-beta-D-glucosyl-(1&lt;-&gt;1)-ceramide + UDP + H(+). The catalysed reaction is a neolactoside IV(3)-beta-GlcNAc-nLc4Cer + UDP-alpha-D-galactose = a neolactoside nLc6Cer + UDP + H(+). It participates in protein modification; protein glycosylation. Its function is as follows. Responsible for the synthesis of complex-type N-linked oligosaccharides in many glycoproteins as well as the carbohydrate moieties of glycolipids. In Mus musculus (Mouse), this protein is Beta-1,4-galactosyltransferase 3.